Reading from the N-terminus, the 242-residue chain is Invasion chromosome antigen R (242 aa).

Its subcellular location is the secreted. Its function is as follows. May contribute to pathogenesis, although some of its characteristics suggest it is a fossil gene. This chain is Invasion chromosome antigen R, found in Shigella flexneri serotype 5a (strain M90T).